Consider the following 346-residue polypeptide: tRNA (guanine-N(7)-)-methyltransferase (346 aa).

Residues glycine 101 and 124-125 (EI) each bind S-adenosyl-L-methionine. The disordered stretch occupies residues 149 to 191 (LKSAGGGGSDAAPESPAAPPTPSEAASPDSTTPSEQQAPTTLV). Positions 171-182 (SEAASPDSTTPS) are enriched in low complexity. S-adenosyl-L-methionine contacts are provided by residues 204-205 (NT) and cysteine 224. The active site involves aspartate 227. 318-320 (TEE) serves as a coordination point for S-adenosyl-L-methionine.

Belongs to the class I-like SAM-binding methyltransferase superfamily. TrmB family. In terms of assembly, forms a complex with trm82.

It localises to the nucleus. The catalysed reaction is guanosine(46) in tRNA + S-adenosyl-L-methionine = N(7)-methylguanosine(46) in tRNA + S-adenosyl-L-homocysteine. Its pathway is tRNA modification; N(7)-methylguanine-tRNA biosynthesis. In terms of biological role, catalyzes the formation of N(7)-methylguanine at position 46 (m7G46) in tRNA. The protein is tRNA (guanine-N(7)-)-methyltransferase (trm8) of Aspergillus terreus (strain NIH 2624 / FGSC A1156).